The chain runs to 365 residues: Regulatory protein RapG (365 aa).

TPR repeat units follow at residues 135–168, 169–202, 209–242, 244–284, and 326–359; these read GKLY…KKKL, ASAL…TSEL, AQLL…DEYA, SAYY…EPNR, and RELS…EELI.

This sequence belongs to the Rap family.

It is found in the cytoplasm. Inhibited by PhrG. Its function is as follows. Involved in the regulation of expression of DegU-controlled genes. Inhibits the binding of DegU to the promoter regions of aprE, coding for an extracellular alkaline protease, and comK, a master regulator for development of genetic competence. RapG does not stimulate dephosphorylation of DegU-P. The protein is Regulatory protein RapG (rapG) of Bacillus subtilis (strain 168).